The primary structure comprises 264 residues: Glutamate racemase (264 aa).

Residues 12-13 (DS) and 44-45 (YG) contribute to the substrate site. Cys75 acts as the Proton donor/acceptor in catalysis. 76–77 (NT) provides a ligand contact to substrate. The Proton donor/acceptor role is filled by Cys186. Substrate is bound at residue 187–188 (TH).

The protein belongs to the aspartate/glutamate racemases family.

It catalyses the reaction L-glutamate = D-glutamate. Its pathway is cell wall biogenesis; peptidoglycan biosynthesis. Functionally, provides the (R)-glutamate required for cell wall biosynthesis. The protein is Glutamate racemase of Stutzerimonas stutzeri (strain A1501) (Pseudomonas stutzeri).